The chain runs to 627 residues: Phosphomethylpyrimidine synthase (627 aa).

The span at Met-1–Pro-24 shows a compositional bias: polar residues. The disordered stretch occupies residues Met-1–Val-29. Substrate is bound by residues Asn-231, Met-260, Tyr-289, His-325, Ser-345–Gly-347, Asp-386–Arg-389, and Glu-425. Residue His-429 participates in Zn(2+) binding. Tyr-452 provides a ligand contact to substrate. His-493 contacts Zn(2+). Residues Cys-573, Cys-576, and Cys-581 each contribute to the [4Fe-4S] cluster site.

The protein belongs to the ThiC family. As to quaternary structure, homodimer. [4Fe-4S] cluster serves as cofactor.

The enzyme catalyses 5-amino-1-(5-phospho-beta-D-ribosyl)imidazole + S-adenosyl-L-methionine = 4-amino-2-methyl-5-(phosphooxymethyl)pyrimidine + CO + 5'-deoxyadenosine + formate + L-methionine + 3 H(+). Its pathway is cofactor biosynthesis; thiamine diphosphate biosynthesis. Catalyzes the synthesis of the hydroxymethylpyrimidine phosphate (HMP-P) moiety of thiamine from aminoimidazole ribotide (AIR) in a radical S-adenosyl-L-methionine (SAM)-dependent reaction. This chain is Phosphomethylpyrimidine synthase, found in Pseudomonas paraeruginosa (strain DSM 24068 / PA7) (Pseudomonas aeruginosa (strain PA7)).